We begin with the raw amino-acid sequence, 177 residues long: Large ribosomal subunit protein uL6 (177 aa).

This sequence belongs to the universal ribosomal protein uL6 family. Part of the 50S ribosomal subunit.

Its function is as follows. This protein binds to the 23S rRNA, and is important in its secondary structure. It is located near the subunit interface in the base of the L7/L12 stalk, and near the tRNA binding site of the peptidyltransferase center. The chain is Large ribosomal subunit protein uL6 from Pseudomonas putida (strain W619).